A 162-amino-acid chain; its full sequence is Probable chemoreceptor glutamine deamidase CheD (162 aa).

Belongs to the CheD family.

It carries out the reaction L-glutaminyl-[protein] + H2O = L-glutamyl-[protein] + NH4(+). Probably deamidates glutamine residues to glutamate on methyl-accepting chemotaxis receptors (MCPs), playing an important role in chemotaxis. The sequence is that of Probable chemoreceptor glutamine deamidase CheD from Clostridium novyi (strain NT).